We begin with the raw amino-acid sequence, 339 residues long: Longiborneol synthase CLM1 (339 aa).

Polar residues predominate over residues 1-17 (MLATPTLSNFDKPSLPS). The tract at residues 1-21 (MLATPTLSNFDKPSLPSSEGG) is disordered. Residues Asp112, Asn241, Ser245, and Glu249 each contribute to the Mg(2+) site. Residues 241 to 249 (NDVLSFYKE) carry the NDXXSXXXE magnesium-binding motif motif.

This sequence belongs to the trichodiene synthase family. It depends on Mg(2+) as a cofactor. The cofactor is Mn(2+).

The catalysed reaction is (2E,6E)-farnesyl diphosphate + H2O = (-)-longiborneol + diphosphate. The protein operates within mycotoxin biosynthesis. In terms of biological role, terpene cyclase involved in the biosynthesis of culmorin, a tricyclic sesquiterpene diol reported to have antifungal activity and some phytotoxicity to wheat coleoptile tissue, contributing to Fusarium head blight disease. The terpene cyclase CLM1 is responsible for the cyclization of farnesyl diphosphate into the intermediate longiborneol. Longiborneol is then hydroxylated in a regio- and endo-stereoselective manner at position C-11 by the cytochrome P450 monooxygenase CLM2 to produce culmorin. Additional non-specific oxygenases are also able to hydroxylate longiborneol at other sites than C-11 leading to 3-hydroxylongiborneol, 5-hydroxylongiborneol, 12-hydroxylongiborneol and 15-hydroxylongiborneol. Moreover, another oxygenase capable of installing a C-11 exo-hydroxy group in longiborneol can also yield 11-epi-acetylculmorin. The production of these longiborneol derivatives is dwarfed by the high abundance of culmorin, suggesting that CLM2 displays superior enzymatic activity to the unidentified, possibly promiscuous, additional oxygenases. The protein is Longiborneol synthase CLM1 of Gibberella zeae (strain ATCC MYA-4620 / CBS 123657 / FGSC 9075 / NRRL 31084 / PH-1) (Wheat head blight fungus).